The primary structure comprises 496 residues: Acyltransferase M4 (496 aa).

His-163 serves as the catalytic Proton acceptor.

Belongs to the plant acyltransferase family. Monomer.

Its pathway is secondary metabolite biosynthesis. Acyltransferase; part of the gene cluster that mediates the biosynthesis of squalestatin S1 (SQS1, also known as zaragozic acid A), a heavily oxidized fungal polyketide that offers potent cholesterol lowering activity by targeting squalene synthase (SS). SQS1 is composed of a 2,8-dioxobicyclic[3.2.1]octane-3,4,5-tricarboxyclic acid core that is connected to two lipophilic polyketide arms. These initial steps feature the priming of an unusual benzoic acid starter unit onto the highly reducing polyketide synthase pks2, followed by oxaloacetate extension and product release to generate a tricarboxylic acid containing product. The phenylalanine ammonia lyase (PAL) M7 and the acyl-CoA ligase M9 are involved in transforming phenylalanine into benzoyl-CoA. The citrate synthase-like protein R3 is involved in connecting the C-alpha-carbons of the hexaketide chain and oxaloacetate to afford the tricarboxylic acid unit. The potential hydrolytic enzymes, M8 and M10, are in close proximity to pks2 and may participate in product release. On the other side, the tetraketide arm is synthesized by a the squalestatin tetraketide synthase pks1 and enzymatically esterified to the core in the last biosynthetic step, by the acetyltransferase M4. The biosynthesis of the tetraketide must involve 3 rounds of chain extension. After the first and second rounds methyl-transfer occurs, and in all rounds of extension the ketoreductase and dehydratase are active. The enoyl reductase and C-MeT of pks1 are not active in the final round of extension. The acetyltransferase M4 appears to have a broad substrate selectivity for its acyl CoA substrate, allowing the in vitro synthesis of novel squalestatins. The biosynthesis of SQS1 requires several oxidative steps likely performed by oxidoreductases M1, R1 and R2. Finally, in support of the identification of the cluster as being responsible for SQS1 production, the cluster contains a gene encoding a putative squalene synthase (SS) R6, suggesting a likely mechanism for self-resistance. The sequence is that of Acyltransferase M4 from Phoma sp. (strain ATCC 20986 / MF5453).